Here is a 305-residue protein sequence, read N- to C-terminus: Acetyl-coenzyme A carboxylase carboxyl transferase subunit alpha (305 aa).

Residues 33-280 (AKLESSTALS…KEQILKDLAD (248 aa)) enclose the CoA carboxyltransferase C-terminal domain.

It belongs to the AccA family. As to quaternary structure, acetyl-CoA carboxylase is a heterohexamer composed of biotin carboxyl carrier protein (AccB), biotin carboxylase (AccC) and two subunits each of ACCase subunit alpha (AccA) and ACCase subunit beta (AccD).

It is found in the cytoplasm. The enzyme catalyses N(6)-carboxybiotinyl-L-lysyl-[protein] + acetyl-CoA = N(6)-biotinyl-L-lysyl-[protein] + malonyl-CoA. It participates in lipid metabolism; malonyl-CoA biosynthesis; malonyl-CoA from acetyl-CoA: step 1/1. Functionally, component of the acetyl coenzyme A carboxylase (ACC) complex. First, biotin carboxylase catalyzes the carboxylation of biotin on its carrier protein (BCCP) and then the CO(2) group is transferred by the carboxyltransferase to acetyl-CoA to form malonyl-CoA. This is Acetyl-coenzyme A carboxylase carboxyl transferase subunit alpha from Treponema denticola (strain ATCC 35405 / DSM 14222 / CIP 103919 / JCM 8153 / KCTC 15104).